Here is a 677-residue protein sequence, read N- to C-terminus: Mitochondrial disaggregase (677 aa).

Residues 1 to 28 (MLGSLVSKRTAPAPRLLLQLLRSPSLRS) constitute a mitochondrion transit peptide. The tract at residues 92-126 (PSPEDTLPGQDSWNGVLSRAGLGVWALATALVVHC) is autoinhibitory. ANK repeat units lie at residues 133 to 162 (SKDAALMEAARANNVQEVSRLLSEGADVNA), 166 to 195 (LGWTALMVAAINRNDSVVQVLLAAGADPNL), 235 to 265 (KGCTALHYAVLADDYRTVKELLDGGANPLQR), and 268 to 297 (MGHTPLDYAREGEVMKLLRTSETKYQEKQR). Residues H316, I318, S353, G354, I355, G356, K357, T358, E425, and N466 each coordinate ATP. A regulatory; slows ATPase and disaggregase activities region spans residues 477–505 (LQLRQEALEMSRNRIAENLGDVQISDKIT). R531 is a binding site for ATP. An N6-acetyllysine modification is found at K559. R590 is an ATP binding site.

Belongs to the ClpA/ClpB family. As to quaternary structure, homododecamer when substrate-bound; the homododecamer consists of 2 homohexamers stacked head-to-head via ANK repeat-mediated interactions. The active substrate-bound form is likely to exist in a dynamic equilibrium between homohexamers and homododecamers. Homotetradecamer in the unbound state which is remodeled upon substrate binding into the homododecamer. Interacts with PHB and PHB2. Interacts with MAVS; the interaction is enhanced by Sendai virus infection. Post-translationally, proteolytically cleaved by protease PARL. ATP-dependent protein disaggregase activity is stimulated by PARL-mediated cleavage of the N-terminal autoinhibitory peptide.

It is found in the mitochondrion intermembrane space. The catalysed reaction is ATP + H2O = ADP + phosphate + H(+). Its activity is regulated as follows. Disaggregase activity is inhibited by ADP. Its function is as follows. Functions as a regulatory ATPase and participates in secretion/protein trafficking process. Has ATP-dependent protein disaggregase activity and is required to maintain the solubility of key mitochondrial proteins. Involved in mitochondrial-mediated antiviral innate immunity, activates RIG-I-mediated signal transduction and production of IFNB1 and pro-inflammatory cytokine IL6. Plays a role in granulocyte differentiation. The sequence is that of Mitochondrial disaggregase from Bos taurus (Bovine).